The primary structure comprises 190 residues: U1 small nuclear ribonucleoprotein C-1 (190 aa).

A Matrin-type zinc finger spans residues 4-36 (YYCDYCDVFLVSESPSVRKAHNSGRNHLTNVRD). The interval 57 to 190 (FETGGGNSTS…PDRARQLGLI (134 aa)) is disordered. Residues 72 to 82 (GNPPGSQPGPP) show a composition bias toward pro residues. A compositionally biased stretch (low complexity) spans 109 to 124 (AMLALMNGQNGMSSPG). The span at 125–141 (SGPPPMRFAGPPIPNNM) shows a compositional bias: pro residues. Positions 180–190 (NPDRARQLGLI) are enriched in basic and acidic residues.

This sequence belongs to the U1 small nuclear ribonucleoprotein C family. U1 snRNP is composed of the 7 core Sm proteins B/B', D1, D2, D3, E, F and G that assemble in a heptameric protein ring on the Sm site of the small nuclear RNA to form the core snRNP, and at least 3 U1 snRNP-specific proteins U1-70K, U1-A and U1-C. U1-C interacts with U1 snRNA and the 5' splice-site region of the pre-mRNA.

Its subcellular location is the nucleus. Component of the spliceosomal U1 snRNP, which is essential for recognition of the pre-mRNA 5' splice-site and the subsequent assembly of the spliceosome. U1-C is directly involved in initial 5' splice-site recognition for both constitutive and regulated alternative splicing. The interaction with the 5' splice-site seems to precede base-pairing between the pre-mRNA and the U1 snRNA. Stimulates commitment or early (E) complex formation by stabilizing the base pairing of the 5' end of the U1 snRNA and the 5' splice-site region. The protein is U1 small nuclear ribonucleoprotein C-1 of Puccinia graminis f. sp. tritici (strain CRL 75-36-700-3 / race SCCL) (Black stem rust fungus).